The sequence spans 416 residues: Probable glucan 1,3-beta-glucosidase A (416 aa).

A signal peptide spans 1–22 (MIFKFSQKALVALCLVVGLAEA). The active-site Proton donor is the glutamate 211. 2 disulfide bridges follow: cysteine 291–cysteine 415 and cysteine 316–cysteine 342. Residue glutamate 308 is the Nucleophile of the active site.

Belongs to the glycosyl hydrolase 5 (cellulase A) family. As to quaternary structure, monomer. It depends on Mn(2+) as a cofactor.

The protein resides in the secreted. It carries out the reaction Successive hydrolysis of beta-D-glucose units from the non-reducing ends of (1-&gt;3)-beta-D-glucans, releasing alpha-glucose.. Beta-glucanases participate in the metabolism of beta-glucan, the main structural component of the cell wall. It could also function biosynthetically as a transglycosylase. The protein is Probable glucan 1,3-beta-glucosidase A (exgA) of Neosartorya fischeri (strain ATCC 1020 / DSM 3700 / CBS 544.65 / FGSC A1164 / JCM 1740 / NRRL 181 / WB 181) (Aspergillus fischerianus).